The following is a 402-amino-acid chain: Tyrosine--tRNA ligase (402 aa).

A 'HIGH' region motif is present at residues 48–57 (PSRPDLHLGH). Positions 232-236 (KMSKS) match the 'KMSKS' region motif. Position 235 (lysine 235) interacts with ATP. The 64-residue stretch at 339-402 (MPIIDLLTLL…KRKFFKIRSK (64 aa)) folds into the S4 RNA-binding domain.

It belongs to the class-I aminoacyl-tRNA synthetase family. TyrS type 2 subfamily. Homodimer.

It is found in the cytoplasm. It carries out the reaction tRNA(Tyr) + L-tyrosine + ATP = L-tyrosyl-tRNA(Tyr) + AMP + diphosphate + H(+). In terms of biological role, catalyzes the attachment of tyrosine to tRNA(Tyr) in a two-step reaction: tyrosine is first activated by ATP to form Tyr-AMP and then transferred to the acceptor end of tRNA(Tyr). This Chlorobium chlorochromatii (strain CaD3) protein is Tyrosine--tRNA ligase.